A 304-amino-acid polypeptide reads, in one-letter code: N-acetyllactosaminide alpha-2,3-sialyltransferase (304 aa).

Residues 221-225 (FPHPA), 242-243 (FE), and 262-263 (SS) each bind CMP-N-acetyl-beta-neuraminate. The active-site Proton donor is the histidine 223.

It belongs to the glycosyltransferase 52 family.

It catalyses the reaction a beta-D-galactosyl-(1-&gt;4)-N-acetyl-beta-D-glucosaminyl derivative + CMP-N-acetyl-beta-neuraminate = an N-acetyl-alpha-neuraminyl-(2-&gt;3)-beta-D-galactosyl-(1-&gt;4)-N-acetyl-beta-D-glucosaminyl derivative + CMP + H(+). Its pathway is bacterial outer membrane biogenesis; lipooligosaccharide biosynthesis. Functionally, catalyzes the transfer of sialic acid from the substrate CMP-N-acetylneuraminate to the terminal galactose residue of the N-acetyllactosamine moiety of surface lipooligosaccharide (LOS). Thus, functions in the sialylation of LOS, which plays a role in the evasion of the host immune response. This chain is N-acetyllactosaminide alpha-2,3-sialyltransferase, found in Haemophilus influenzae (strain ATCC 51907 / DSM 11121 / KW20 / Rd).